The primary structure comprises 557 residues: Dihydroxy-acid dehydratase (557 aa).

A [2Fe-2S] cluster-binding site is contributed by cysteine 50. Aspartate 82 is a binding site for Mg(2+). Residue cysteine 123 participates in [2Fe-2S] cluster binding. Mg(2+) is bound by residues aspartate 124 and lysine 125. Lysine 125 is modified (N6-carboxylysine). Residue cysteine 195 participates in [2Fe-2S] cluster binding. Glutamate 447 contributes to the Mg(2+) binding site. The active-site Proton acceptor is serine 473.

This sequence belongs to the IlvD/Edd family. In terms of assembly, homodimer. It depends on [2Fe-2S] cluster as a cofactor. Mg(2+) is required as a cofactor.

The enzyme catalyses (2R)-2,3-dihydroxy-3-methylbutanoate = 3-methyl-2-oxobutanoate + H2O. The catalysed reaction is (2R,3R)-2,3-dihydroxy-3-methylpentanoate = (S)-3-methyl-2-oxopentanoate + H2O. Its pathway is amino-acid biosynthesis; L-isoleucine biosynthesis; L-isoleucine from 2-oxobutanoate: step 3/4. It functions in the pathway amino-acid biosynthesis; L-valine biosynthesis; L-valine from pyruvate: step 3/4. In terms of biological role, functions in the biosynthesis of branched-chain amino acids. Catalyzes the dehydration of (2R,3R)-2,3-dihydroxy-3-methylpentanoate (2,3-dihydroxy-3-methylvalerate) into 2-oxo-3-methylpentanoate (2-oxo-3-methylvalerate) and of (2R)-2,3-dihydroxy-3-methylbutanoate (2,3-dihydroxyisovalerate) into 2-oxo-3-methylbutanoate (2-oxoisovalerate), the penultimate precursor to L-isoleucine and L-valine, respectively. The polypeptide is Dihydroxy-acid dehydratase (Herminiimonas arsenicoxydans).